The sequence spans 906 residues: Cadherin-2A (906 aa).

An N-terminal signal peptide occupies residues 1–28 (MCRKEPFLLPTALCILAALVLHQGPVEA). A propeptide spanning residues 29–160 (LGGSRLCKTG…KHNGLQRQKR (132 aa)) is cleaved from the precursor. 5 Cadherin domains span residues 161 to 268 (DWVI…RPEF), 269 to 383 (LHQI…PPEF), 384 to 498 (TAMT…NPYF), 499 to 604 (TPNP…DNAP), and 605 to 714 (YVYP…TTAP). Topologically, residues 161-724 (DWVIPPINVP…IIGTGLGTGA (564 aa)) are extracellular. The Ca(2+) site is built by Glu171, Asp227, Glu229, Asp260, Met261, Asn262, Asp263, and Asn264. Residue Asn274 is glycosylated (N-linked (GlcNAc...) asparagine). Ca(2+)-binding residues include Asp294, Asp296, and Asn302. N-linked (GlcNAc...) asparagine glycosylation is present at Asn326. Asp354 is a Ca(2+) binding site. N-linked (GlcNAc...) asparagine glycosylation is found at Asn403, Asn573, Asn623, Asn652, and Asn693. Residues 725-746 (IIAILLCIIILLTLVLMFVVWM) traverse the membrane as a helical segment. The Cytoplasmic portion of the chain corresponds to 747–906 (KRRDKERQAK…LADMYGGSDD (160 aa)). Disordered regions lie at residues 775–800 (EEGG…EPDT) and 863–884 (SGST…EQDY). Over residues 776-785 (EGGGEEDQDY) the composition is skewed to acidic residues. Residues 863-880 (SGSTAGSLSSLNSSSSGG) show a composition bias toward low complexity.

Homodimer (via extracellular region). Can also form heterodimers with other cadherins (via extracellular region). Dimerization occurs in trans, i.e. with a cadherin chain from another cell.

It is found in the cell membrane. The protein resides in the sarcolemma. It localises to the cell junction. The protein localises to the cell surface. Its subcellular location is the desmosome. It is found in the adherens junction. Calcium-dependent cell adhesion protein; preferentially mediates homotypic cell-cell adhesion. Cadherins may thus contribute to the sorting of heterogeneous cell types, and thereby play an important role during embryonic development. Required for proper neurite branching. Required for pre- and postsynaptic organization. In Xenopus laevis (African clawed frog), this protein is Cadherin-2A (cdh2-a).